The chain runs to 320 residues: Tryptophan--tRNA ligase (320 aa).

Residues 8 to 10 and 16 to 17 contribute to the ATP site; these read QPT and GN. A 'HIGH' region motif is present at residues 9 to 17; the sequence is PTGRPHWGN. Asp131 contacts L-tryptophan. ATP-binding positions include 143-145, Val182, and 189-193; these read GVD and KMSKS. The 'KMSKS' region motif lies at 189–193; it reads KMSKS.

This sequence belongs to the class-I aminoacyl-tRNA synthetase family. In terms of assembly, homodimer.

It localises to the cytoplasm. The enzyme catalyses tRNA(Trp) + L-tryptophan + ATP = L-tryptophyl-tRNA(Trp) + AMP + diphosphate + H(+). Its function is as follows. Catalyzes the attachment of tryptophan to tRNA(Trp). In Rhodopirellula baltica (strain DSM 10527 / NCIMB 13988 / SH1), this protein is Tryptophan--tRNA ligase.